We begin with the raw amino-acid sequence, 338 residues long: MSKLFSEYKLKDVTLKNRIVMSPMCMYSVENKDGIATDFHFAHYVSRAAGGTGLVILEATAVQEVGRISEFDLGLWNDEQVPALKRLVDGLHYHGAKAGIQLAHAGRKAVLPGEIVAPSAIPFDEKSAKPVELTKEAIKEVVADFKRAAYRAKEAGFDVIEIHAAHGYLIHQFLSPITNRREDNYGGPAGNRYKILSDIIKAVKEVWDGPIIVRVSATDYAHGGLQLEDHIPFAKWMKADGVELIDVSTGGLVNVAPPVFPGYQVPFADEIRRGAGIATGALGLITRGEQAEEILCNERADLIIVGRELLRNPYFAKDAAEQLGETIEGPKQYSRAWK.

Ser22 to Cys25 contributes to the FMN binding site. Tyr27 contributes to the substrate binding site. Ala59 and Gln101 together coordinate FMN. His163–His166 contributes to the substrate binding site. Residues Arg214 and Gly306 to Arg307 each bind FMN.

The protein belongs to the NADH:flavin oxidoreductase/NADH oxidase family. NamA subfamily. As to quaternary structure, homotetramer. Requires FMN as cofactor.

It carries out the reaction A + NADPH + H(+) = AH2 + NADP(+). Catalyzes the reduction of the double bond of an array of alpha,beta-unsaturated aldehydes and ketones. It also reduces the nitro group of nitroester and nitroaromatic compounds. It could have a role in detoxification processes. In Listeria monocytogenes serotype 4a (strain HCC23), this protein is NADPH dehydrogenase.